Consider the following 397-residue polypeptide: ORC1-type DNA replication protein 8 (397 aa).

ATP-binding positions include 61-65 (VGKTA), tyrosine 211, and arginine 223.

The protein belongs to the CDC6/cdc18 family.

Involved in regulation of DNA replication. This chain is ORC1-type DNA replication protein 8 (orc8), found in Halobacterium salinarum (strain ATCC 700922 / JCM 11081 / NRC-1) (Halobacterium halobium).